The primary structure comprises 348 residues: D-lactate dehydrogenase kk1H (348 aa).

Residues 158-159 (RI), Asp-178, 208-209 (CP), 235-237 (TSR), and Asp-261 contribute to the NAD(+) site. The active site involves Arg-237. Glu-266 is an active-site residue. The active-site Proton donor is His-298.

Belongs to the D-isomer specific 2-hydroxyacid dehydrogenase family.

The protein operates within secondary metabolite biosynthesis. Functionally, D-lactate dehydrogenase; part of the gene cluster that mediates the biosynthesis of KK-1, a novel cyclic depsipeptide with 10 residues which is a promising active compound with high activity against many plant pathogens, especially Botrytis cinerea. Within the pathway, kk1H catalyzes in the synthesis of D-lactic acid from pyruvic acid, which is recognized by the A domain of the first kk1B module. The nonribosomal peptide synthetase (NRPS) kk1B catalyzes the elongation and cyclization of the decapeptide chain composed of 1 D-lactic acid residue (D-Lac), 1 pipecolic acid residue (Pip), 1 aspartic acid residue (Asp), 1 isoleucine residue (Ile), 1 glycine residue (Gly), 1 tyrosine residue (Tyr) and 4 valine residues (Val). The Asp, Ile and 3 Val residues are N-methylated by the 5 methyltransferase domains from the NRPS (found in modules 3, 5, 6, 7 and 9), whereas the Tyr residue is O-methylated by the cluster encoded O-methyltransferase kk1A. The thioesterase kk1J is likely to be involved in the corrective mechanism of peptide chain synthesis. The D-lactate dehydrogenase kk1H is involved in the synthesis of D-lactic acid from pyruvic acid, which is recognized by the A domain of the first kk1B module. The pyrroline-5-carboxylate reductase kk1I is involved in the synthesis of the L-pipecolic acid residue of KK-1 from delta-1-pyrroline-5-carboxylate (P5C), a metabolic intermediate of lysine. It still is unclear how kk1C and kk1D are involved in the production of KK-1. The protein is D-lactate dehydrogenase kk1H of Curvularia clavata.